The primary structure comprises 111 residues: Integration host factor subunit alpha (111 aa).

It belongs to the bacterial histone-like protein family. In terms of assembly, heterodimer of an alpha and a beta chain.

Its function is as follows. This protein is one of the two subunits of integration host factor, a specific DNA-binding protein that functions in genetic recombination as well as in transcriptional and translational control. This chain is Integration host factor subunit alpha, found in Chelativorans sp. (strain BNC1).